The primary structure comprises 481 residues: Glutamate--tRNA ligase (481 aa).

The 'HIGH' region signature appears at 10 to 20 (PSPTGHLHIGN). Residues 251–255 (KLSKR) carry the 'KMSKS' region motif. Lys254 serves as a coordination point for ATP.

Belongs to the class-I aminoacyl-tRNA synthetase family. Glutamate--tRNA ligase type 1 subfamily. As to quaternary structure, monomer.

The protein localises to the cytoplasm. It carries out the reaction tRNA(Glu) + L-glutamate + ATP = L-glutamyl-tRNA(Glu) + AMP + diphosphate. Its function is as follows. Catalyzes the attachment of glutamate to tRNA(Glu) in a two-step reaction: glutamate is first activated by ATP to form Glu-AMP and then transferred to the acceptor end of tRNA(Glu). The polypeptide is Glutamate--tRNA ligase (Exiguobacterium sibiricum (strain DSM 17290 / CCUG 55495 / CIP 109462 / JCM 13490 / 255-15)).